The following is a 398-amino-acid chain: ATP-dependent (S)-NAD(P)H-hydrate dehydratase 1 (398 aa).

Positions 80-391 constitute a YjeF C-terminal domain; sequence LLRKAFQMIP…GYIGEAFELV (312 aa). (6S)-NADPHX contacts are provided by residues G187 and 240 to 246; that span reads NHVEFQR. ATP-binding positions include 280 to 284 and 300 to 309; these read KGSID and GSPKRCGGQG. Residue D310 coordinates (6S)-NADPHX.

This sequence belongs to the NnrD/CARKD family. It depends on Mg(2+) as a cofactor.

It localises to the cytoplasm. It carries out the reaction (6S)-NADHX + ATP = ADP + phosphate + NADH + H(+). It catalyses the reaction (6S)-NADPHX + ATP = ADP + phosphate + NADPH + H(+). In terms of biological role, catalyzes the dehydration of the S-form of NAD(P)HX at the expense of ATP, which is converted to ADP. Together with NAD(P)HX epimerase, which catalyzes the epimerization of the S- and R-forms, the enzyme allows the repair of both epimers of NAD(P)HX, a damaged form of NAD(P)H that is a result of enzymatic or heat-dependent hydration. The protein is ATP-dependent (S)-NAD(P)H-hydrate dehydratase 1 of Puccinia graminis f. sp. tritici (strain CRL 75-36-700-3 / race SCCL) (Black stem rust fungus).